A 95-amino-acid chain; its full sequence is Aspartyl/glutamyl-tRNA(Asn/Gln) amidotransferase subunit C (95 aa).

This sequence belongs to the GatC family. In terms of assembly, heterotrimer of A, B and C subunits.

The enzyme catalyses L-glutamyl-tRNA(Gln) + L-glutamine + ATP + H2O = L-glutaminyl-tRNA(Gln) + L-glutamate + ADP + phosphate + H(+). It catalyses the reaction L-aspartyl-tRNA(Asn) + L-glutamine + ATP + H2O = L-asparaginyl-tRNA(Asn) + L-glutamate + ADP + phosphate + 2 H(+). Its function is as follows. Allows the formation of correctly charged Asn-tRNA(Asn) or Gln-tRNA(Gln) through the transamidation of misacylated Asp-tRNA(Asn) or Glu-tRNA(Gln) in organisms which lack either or both of asparaginyl-tRNA or glutaminyl-tRNA synthetases. The reaction takes place in the presence of glutamine and ATP through an activated phospho-Asp-tRNA(Asn) or phospho-Glu-tRNA(Gln). The polypeptide is Aspartyl/glutamyl-tRNA(Asn/Gln) amidotransferase subunit C (Gluconacetobacter diazotrophicus (strain ATCC 49037 / DSM 5601 / CCUG 37298 / CIP 103539 / LMG 7603 / PAl5)).